A 451-amino-acid chain; its full sequence is Trigger factor (451 aa).

Positions 173 to 258 constitute a PPIase FKBP-type domain; the sequence is GDRVTVDFVG…LKKVEWAHLP (86 aa).

It belongs to the FKBP-type PPIase family. Tig subfamily.

It localises to the cytoplasm. It carries out the reaction [protein]-peptidylproline (omega=180) = [protein]-peptidylproline (omega=0). Functionally, involved in protein export. Acts as a chaperone by maintaining the newly synthesized protein in an open conformation. Functions as a peptidyl-prolyl cis-trans isomerase. The protein is Trigger factor of Cupriavidus taiwanensis (strain DSM 17343 / BCRC 17206 / CCUG 44338 / CIP 107171 / LMG 19424 / R1) (Ralstonia taiwanensis (strain LMG 19424)).